The primary structure comprises 390 residues: Histamine H4 receptor (390 aa).

The Extracellular portion of the chain corresponds to 1 to 19; sequence MPDTNSTINLSLSTRVTLA. 2 N-linked (GlcNAc...) asparagine glycosylation sites follow: N5 and N9. The chain crosses the membrane as a helical span at residues 20-40; it reads FFMSLVAFAIMLGNALVILAF. Residues 41 to 52 lie on the Cytoplasmic side of the membrane; the sequence is VVDKNLRHRSSY. Residues 53 to 73 form a helical membrane-spanning segment; sequence FFLNLAISDFFVGVISIPLYI. Topologically, residues 74-87 are extracellular; sequence PHTLFEWDFGKEIC. Cysteines 87 and 164 form a disulfide. A helical membrane pass occupies residues 88–108; sequence VFWLTTDYLLCTASVYNIVLI. The Cytoplasmic portion of the chain corresponds to 109 to 131; that stretch reads SYDRYLSVSNAVSYRTQHTGVLK. Residues 132–152 traverse the membrane as a helical segment; that stretch reads IVTLMVAVWVLAFLVNGPMIL. Over 153-172 the chain is Extracellular; it reads VSESWKDEGSECEPGFFSEW. The helical transmembrane segment at 173–193 threads the bilayer; the sequence is YILAITSFLEFVIPVILVAYF. Topologically, residues 194 to 304 are cytoplasmic; that stretch reads NMNIYWSLWK…LLRARRLAKS (111 aa). Residues 305–325 traverse the membrane as a helical segment; it reads LAILLGVFAVCWAPYSLFTIV. Residues 326-341 lie on the Extracellular side of the membrane; the sequence is LSFYSSATGPKSVWYR. Residues 342 to 362 form a helical membrane-spanning segment; that stretch reads IAFWLQWFNSFVNPLLYPLCH. The Cytoplasmic portion of the chain corresponds to 363-390; sequence KRFQKAFLKIFCIKKQPLPSQHSRSVSS.

The protein belongs to the G-protein coupled receptor 1 family. Interacts with TSPAN4. As to expression, expressed primarily in the bone marrow and eosinophils. Shows preferential distribution in cells of immunological relevance such as T-cells, dendritic cells, monocytes, mast cells, neutrophils. Also expressed in a wide variety of peripheral tissues, including the heart, kidney, liver, lung, pancreas, skeletal muscle, prostate, small intestine, spleen, testis, colon, fetal liver and lymph node.

The protein localises to the cell membrane. In terms of biological role, the H4 subclass of histamine receptors could mediate the histamine signals in peripheral tissues. Displays a significant level of constitutive activity (spontaneous activity in the absence of agonist). This is Histamine H4 receptor (HRH4) from Homo sapiens (Human).